Consider the following 126-residue polypeptide: MARVTVEDCVLKVPNRFELVLIAGQRARDISAGAKLTVERDNDKNPVVALREIADDTVPLDALQNALIQNLQKHVEVDEPEEDEMEGFIADRDLAFENVANEDEMIEDGMSINDTGADFDVDSGDE.

It belongs to the RNA polymerase subunit omega family. As to quaternary structure, the RNAP catalytic core consists of 2 alpha, 1 beta, 1 beta' and 1 omega subunit. When a sigma factor is associated with the core the holoenzyme is formed, which can initiate transcription.

It catalyses the reaction RNA(n) + a ribonucleoside 5'-triphosphate = RNA(n+1) + diphosphate. Promotes RNA polymerase assembly. Latches the N- and C-terminal regions of the beta' subunit thereby facilitating its interaction with the beta and alpha subunits. This is DNA-directed RNA polymerase subunit omega from Paramagnetospirillum magneticum (strain ATCC 700264 / AMB-1) (Magnetospirillum magneticum).